A 271-amino-acid polypeptide reads, in one-letter code: Glutamate racemase (271 aa).

Residues D9–S10 and Y41–G42 contribute to the substrate site. C72 acts as the Proton donor/acceptor in catalysis. Residue N73–T74 participates in substrate binding. C183 (proton donor/acceptor) is an active-site residue. T184–H185 contributes to the substrate binding site.

The protein belongs to the aspartate/glutamate racemases family.

It carries out the reaction L-glutamate = D-glutamate. The protein operates within cell wall biogenesis; peptidoglycan biosynthesis. Provides the (R)-glutamate required for cell wall biosynthesis. The protein is Glutamate racemase of Exiguobacterium sibiricum (strain DSM 17290 / CCUG 55495 / CIP 109462 / JCM 13490 / 255-15).